The following is a 717-amino-acid chain: P-loop NTPase domain-containing protein LPA1 homolog 2 (717 aa).

2 disordered regions span residues K235–T259 and H532–S629. 2 stretches are compositionally biased toward polar residues: residues V243–T259 and H532–G545. The segment covering S559–N582 has biased composition (acidic residues). Positions N583–D602 are enriched in basic and acidic residues.

In terms of biological role, may be not required for the accumulation of phytic acid in seeds. Phytic acid is the primary storage form of phosphorus in cereal grains and other plant seeds. The protein is P-loop NTPase domain-containing protein LPA1 homolog 2 of Arabidopsis thaliana (Mouse-ear cress).